A 116-amino-acid chain; its full sequence is Protein Wnt-5a (116 aa).

Ser-1 carries the O-palmitoleoyl serine; by PORCN lipid modification. N-linked (GlcNAc...) asparagine glycosylation is found at Asn-69 and Asn-83. An intrachain disulfide couples Cys-82 to Cys-97.

Belongs to the Wnt family. Post-translationally, palmitoleoylation is required for efficient binding to frizzled receptors. Depalmitoleoylation leads to Wnt signaling pathway inhibition.

It localises to the secreted. The protein resides in the extracellular space. It is found in the extracellular matrix. Ligand for members of the frizzled family of seven transmembrane receptors. Can activate or inhibit canonical Wnt signaling, depending on receptor context. Required during embryogenesis for extension of the primary anterior-posterior axis. This is Protein Wnt-5a (WNT-5A) from Alopias vulpinus (Common thresher shark).